The sequence spans 394 residues: Elongation factor Tu (394 aa).

Residues 10 to 204 (KPHINVGTIG…HLDNYIPEPK (195 aa)) form the tr-type G domain. The interval 19 to 26 (GHVDHGKT) is G1. GTP is bound at residue 19–26 (GHVDHGKT). Residue threonine 26 coordinates Mg(2+). The segment at 60-64 (GITIN) is G2. A G3 region spans residues 81 to 84 (DCPG). Residues 81–85 (DCPGH) and 136–139 (NKCD) each bind GTP. The G4 stretch occupies residues 136–139 (NKCD). Residues 174-176 (SAL) form a G5 region.

This sequence belongs to the TRAFAC class translation factor GTPase superfamily. Classic translation factor GTPase family. EF-Tu/EF-1A subfamily. As to quaternary structure, monomer.

Its subcellular location is the cytoplasm. It catalyses the reaction GTP + H2O = GDP + phosphate + H(+). Its function is as follows. GTP hydrolase that promotes the GTP-dependent binding of aminoacyl-tRNA to the A-site of ribosomes during protein biosynthesis. This Wigglesworthia glossinidia brevipalpis protein is Elongation factor Tu.